Consider the following 364-residue polypeptide: Rhomboid domain-containing protein 2 (364 aa).

5 helical membrane passes run 11–31 (WCLCPEVPSATFFTALLSLLV), 63–83 (LVTYIFVYENPISLLCGAIII), 100–120 (CFFTVIFAIFSAIIFLSFEAV), 158–178 (FGMVVPSVLVPWLLLGASWLI), and 184–204 (LSNVCGLSIGLAYGLTYCYSI). Disordered stretches follow at residues 242–282 (AQSR…KLAS) and 317–364 (SSVY…VPMP). Polar residues-rich tracts occupy residues 267–276 (HPVSQTQHAS) and 317–329 (SSVYPASAGTSLG).

It belongs to the peptidase S54 family.

It localises to the golgi apparatus. It is found in the cis-Golgi network membrane. The sequence is that of Rhomboid domain-containing protein 2 (RHBDD2) from Homo sapiens (Human).